Consider the following 361-residue polypeptide: MLNEVLKGIEGLDNDMIVKAKNRVDSLAKPLGSLGKLEDIAIRLSGITGNMFNNIDKKCVIIMSSDNGVEEEGVASAPQCVTLLQTKNFIKGTTGVATLAKANGTDLMVFDVGINSDEVVEGVINRKISKGTKNIYKEPAMTYEEAKKSLEIGIEAVKIAKEKGYKILGVGEMGIGNTTTSAAVLKALIGCETSQVVGKGGGINNDSFEKKKRIVEEVVKKHNINFDDSIDIISKVGGYDIGAMTGVFLGAAFYRIPVVIDGFISVVTALLANRLNPLVKEFCFTSHKSQEIGYELAIKELGLDPMLDLNMRLGEGSGCPIAFSVIDFATAMMNNMATFEEGNIDNSYLEDVKDEECYIVL.

Catalysis depends on Glu315, which acts as the Proton acceptor.

This sequence belongs to the CobT family.

The enzyme catalyses 5,6-dimethylbenzimidazole + nicotinate beta-D-ribonucleotide = alpha-ribazole 5'-phosphate + nicotinate + H(+). The protein operates within nucleoside biosynthesis; alpha-ribazole biosynthesis; alpha-ribazole from 5,6-dimethylbenzimidazole: step 1/2. Functionally, catalyzes the synthesis of alpha-ribazole-5'-phosphate from nicotinate mononucleotide (NAMN) and 5,6-dimethylbenzimidazole (DMB). In Clostridium perfringens (strain 13 / Type A), this protein is Nicotinate-nucleotide--dimethylbenzimidazole phosphoribosyltransferase.